The following is a 182-amino-acid chain: Protein Syd (182 aa).

Belongs to the Syd family.

Its subcellular location is the cell inner membrane. Its function is as follows. Interacts with the SecY protein in vivo. May bind preferentially to an uncomplexed state of SecY, thus functioning either as a chelating agent for excess SecY in the cell or as a regulatory factor that negatively controls the translocase function. The polypeptide is Protein Syd (Aeromonas salmonicida (strain A449)).